The following is a 274-amino-acid chain: 5-deoxy-glucuronate isomerase (274 aa).

This sequence belongs to the isomerase IolB family.

It catalyses the reaction 5-deoxy-D-glucuronate = 5-dehydro-2-deoxy-D-gluconate. It participates in polyol metabolism; myo-inositol degradation into acetyl-CoA; acetyl-CoA from myo-inositol: step 4/7. Its function is as follows. Involved in the isomerization of 5-deoxy-glucuronate (5DG) to 5-dehydro-2-deoxy-D-gluconate (DKG or 2-deoxy-5-keto-D-gluconate). The chain is 5-deoxy-glucuronate isomerase from Geobacillus thermodenitrificans (strain NG80-2).